Consider the following 41-residue polypeptide: Large ribosomal subunit protein bL36 (41 aa).

Belongs to the bacterial ribosomal protein bL36 family.

The polypeptide is Large ribosomal subunit protein bL36 (Rickettsia prowazekii (strain Madrid E)).